Here is a 453-residue protein sequence, read N- to C-terminus: 4,4'-diapolycopene-4,4'-dial dehydrogenase (453 aa).

Residues 1–20 (MPDNDSHSLKSLPERQREDL) show a composition bias toward basic and acidic residues. The interval 1–23 (MPDNDSHSLKSLPERQREDLFSA) is disordered. Catalysis depends on residues glutamate 215 and cysteine 249.

Belongs to the aldehyde dehydrogenase family.

The catalysed reaction is all-trans-4,4'-diapolycopene-4,4'-dial + 2 A + 2 H2O = all-trans-4,4'-diapolycopene-4,4'-dioate + 2 AH2 + 2 H(+). It participates in carotenoid biosynthesis. Involved in the biosynthesis of the major C30 carotenoid 4,4'-diapolycopene-4,4'-dioic acid, which protects B.firmus from peroxidative reactions. Catalyzes the oxidation of 4,4'-diapolycopene-4,4'-dial to yield 4,4'-diapolycopene-4,4'-dioic aci. The sequence is that of 4,4'-diapolycopene-4,4'-dial dehydrogenase from Cytobacillus firmus (Bacillus firmus).